A 713-amino-acid chain; its full sequence is Mitochondrial intermediate peptidase (713 aa).

The N-terminal 35 residues, 1 to 35 (MLCVGRLGGLGARAAALPPRRAGRGSLEAGIRARR), are a transit peptide targeting the mitochondrion. An N6-acetyllysine modification is found at lysine 126. Histidine 495 provides a ligand contact to Zn(2+). Glutamate 496 is an active-site residue. Positions 499 and 502 each coordinate Zn(2+).

It belongs to the peptidase M3 family. As to quaternary structure, monomer. Requires Zn(2+) as cofactor.

It is found in the mitochondrion matrix. It carries out the reaction Release of an N-terminal octapeptide as second stage of processing of some proteins imported into the mitochondrion.. Its activity is regulated as follows. Activity is divalent cation-dependent. It is stimulated by manganese, magnesium or calcium ions and reversibly inhibited by zinc, cobalt and iron. Functionally, cleaves proteins, imported into the mitochondrion, to their mature size. This Homo sapiens (Human) protein is Mitochondrial intermediate peptidase (MIPEP).